The following is a 251-amino-acid chain: Aspartate/glutamate leucyltransferase (251 aa).

The protein belongs to the R-transferase family. Bpt subfamily.

The protein resides in the cytoplasm. The catalysed reaction is N-terminal L-glutamyl-[protein] + L-leucyl-tRNA(Leu) = N-terminal L-leucyl-L-glutamyl-[protein] + tRNA(Leu) + H(+). It catalyses the reaction N-terminal L-aspartyl-[protein] + L-leucyl-tRNA(Leu) = N-terminal L-leucyl-L-aspartyl-[protein] + tRNA(Leu) + H(+). Functionally, functions in the N-end rule pathway of protein degradation where it conjugates Leu from its aminoacyl-tRNA to the N-termini of proteins containing an N-terminal aspartate or glutamate. The polypeptide is Aspartate/glutamate leucyltransferase (Stenotrophomonas maltophilia (strain K279a)).